Here is a 619-residue protein sequence, read N- to C-terminus: Lateral signaling target protein 2 homolog (619 aa).

Residues 501-561 (DSDCEQCTAC…VCNLCFLYKI (61 aa)) form an FYVE-type zinc finger. 8 residues coordinate Zn(2+): cysteine 507, cysteine 510, cysteine 523, cysteine 526, cysteine 531, cysteine 534, cysteine 553, and cysteine 556. The interval 598–619 (HERSQDGSQSNESPTATTATTI) is disordered. The span at 603–619 (DGSQSNESPTATTATTI) shows a compositional bias: polar residues.

Belongs to the lst-2 family.

Its function is as follows. Negative regulator of epidermal growth factor receptor (EGFR) signaling. In Brugia malayi (Filarial nematode worm), this protein is Lateral signaling target protein 2 homolog.